We begin with the raw amino-acid sequence, 738 residues long: Photosystem I P700 chlorophyll a apoprotein A2 (738 aa).

8 helical membrane passes run Leu46–Ala69, Leu135–Gln158, Leu175–Ile199, Ile273–Tyr291, Leu333–Tyr356, Ala372–Ile398, Ala420–His442, and Phe521–Val539. Positions 563 and 572 each coordinate [4Fe-4S] cluster. 2 helical membrane-spanning segments follow: residues Ala579–Trp600 and Leu647–Ile669. His658, Met666, and Tyr674 together coordinate chlorophyll a. Trp675 contacts phylloquinone. A helical transmembrane segment spans residues Val711–Ala731.

The protein belongs to the PsaA/PsaB family. In terms of assembly, the PsaA/B heterodimer binds the P700 chlorophyll special pair and subsequent electron acceptors. PSI consists of a core antenna complex that captures photons, and an electron transfer chain that converts photonic excitation into a charge separation. The cyanobacterial PSI reaction center is composed of one copy each of PsaA,B,C,D,E,F,I,J,K,L,M and X, and forms trimeric complexes. Requires PSI electron transfer chain: 5 chlorophyll a, 1 chlorophyll a', 2 phylloquinones and 3 4Fe-4S clusters. PSI core antenna: 90 chlorophyll a, 22 carotenoids, 3 phospholipids and 1 galactolipid. P700 is a chlorophyll a/chlorophyll a' dimer, A0 is one or more chlorophyll a, A1 is one or both phylloquinones and FX is a shared 4Fe-4S iron-sulfur center. as cofactor.

Its subcellular location is the cellular thylakoid membrane. The enzyme catalyses reduced [plastocyanin] + hnu + oxidized [2Fe-2S]-[ferredoxin] = oxidized [plastocyanin] + reduced [2Fe-2S]-[ferredoxin]. PsaA and PsaB bind P700, the primary electron donor of photosystem I (PSI), as well as the electron acceptors A0, A1 and FX. PSI is a plastocyanin/cytochrome c6-ferredoxin oxidoreductase, converting photonic excitation into a charge separation, which transfers an electron from the donor P700 chlorophyll pair to the spectroscopically characterized acceptors A0, A1, FX, FA and FB in turn. Oxidized P700 is reduced on the lumenal side of the thylakoid membrane by plastocyanin or cytochrome c6. This chain is Photosystem I P700 chlorophyll a apoprotein A2, found in Synechococcus sp. (strain WH7803).